The chain runs to 301 residues: Light-independent protochlorophyllide reductase iron-sulfur ATP-binding protein (301 aa).

The segment covering 1-13 (MNVTLRPPLTTAP) has biased composition (low complexity). The interval 1 to 21 (MNVTLRPPLTTAPRRPDGAGS) is disordered. Residues 45–50 (GIGKST) and Lys74 contribute to the ATP site. Ser49 is a binding site for Mg(2+). Cys130 and Cys164 together coordinate [4Fe-4S] cluster. Residues 215 to 216 (NR) and 239 to 241 (PDL) each bind ATP.

This sequence belongs to the NifH/BchL/ChlL family. As to quaternary structure, homodimer. Protochlorophyllide reductase is composed of three subunits; BchL, BchN and BchB. [4Fe-4S] cluster serves as cofactor.

It catalyses the reaction chlorophyllide a + oxidized 2[4Fe-4S]-[ferredoxin] + 2 ADP + 2 phosphate = protochlorophyllide a + reduced 2[4Fe-4S]-[ferredoxin] + 2 ATP + 2 H2O. It functions in the pathway porphyrin-containing compound metabolism; bacteriochlorophyll biosynthesis (light-independent). Its function is as follows. Component of the dark-operative protochlorophyllide reductase (DPOR) that uses Mg-ATP and reduced ferredoxin to reduce ring D of protochlorophyllide (Pchlide) to form chlorophyllide a (Chlide). This reaction is light-independent. The L component serves as a unique electron donor to the NB-component of the complex, and binds Mg-ATP. The polypeptide is Light-independent protochlorophyllide reductase iron-sulfur ATP-binding protein (Bradyrhizobium sp. (strain BTAi1 / ATCC BAA-1182)).